We begin with the raw amino-acid sequence, 310 residues long: Methionyl-tRNA formyltransferase (310 aa).

109–112 serves as a coordination point for (6S)-5,6,7,8-tetrahydrofolate; the sequence is SLLP.

It belongs to the Fmt family.

It carries out the reaction L-methionyl-tRNA(fMet) + (6R)-10-formyltetrahydrofolate = N-formyl-L-methionyl-tRNA(fMet) + (6S)-5,6,7,8-tetrahydrofolate + H(+). Attaches a formyl group to the free amino group of methionyl-tRNA(fMet). The formyl group appears to play a dual role in the initiator identity of N-formylmethionyl-tRNA by promoting its recognition by IF2 and preventing the misappropriation of this tRNA by the elongation apparatus. This is Methionyl-tRNA formyltransferase from Parvibaculum lavamentivorans (strain DS-1 / DSM 13023 / NCIMB 13966).